Here is a 926-residue protein sequence, read N- to C-terminus: Storkhead-box protein 2 (926 aa).

Disordered regions lie at residues 1 to 32 (MKKT…RSEK), 338 to 394 (EEEK…IPGG), 452 to 529 (EMPF…SYVD), 632 to 693 (GVKK…SLDK), 724 to 803 (LKSH…GTMQ), and 825 to 926 (LAPK…VTSV). Residues 18–32 (FSDRASDRMRSRSEK) show a composition bias toward basic and acidic residues. The span at 353–378 (HSGRSKKSRTHRKSHGKSRSHSKTRV) shows a compositional bias: basic residues. A compositionally biased stretch (basic and acidic residues) spans 379–394 (SKGDPSDGSHLDIPGG). Residues 463–472 (SHSKVHRSHS) are compositionally biased toward basic residues. Residues 473 to 495 (HTQDRRSRNERSNKAKERSRSMD) are compositionally biased toward basic and acidic residues. The span at 518-529 (QDDQTPSQSYVD) shows a compositional bias: polar residues. Basic and acidic residues-rich tracts occupy residues 632 to 658 (GVKK…EESP) and 684 to 693 (HGAEPSSLDK). Positions 746-772 (LGTSAAQATPASQRQQESGGNQETSFD) are enriched in polar residues. The segment covering 785 to 799 (GANKNTEEEKNREDV) has biased composition (basic and acidic residues). Composition is skewed to polar residues over residues 847 to 884 (MDSS…QNPA) and 914 to 926 (KPSN…VTSV).

This is Storkhead-box protein 2 (STOX2) from Macaca fascicularis (Crab-eating macaque).